The chain runs to 326 residues: Probable 9-O-acetyl-N-acetylneuraminic acid deacetylase (326 aa).

Residues 1–21 (MNAIISPDYYYVLTVAGQSNA) form the signal peptide.

It is found in the periplasm. Functionally, probably catalyzes the hydrolysis of the 9-O-acetyl group of 9-O-acetyl-N-acetylneuraminate (Neu5,9Ac2). Is required for growth of E.coli on Neu5,9Ac2, an alternative sialic acid commonly found in mammalian host mucosal sites, in particular in the human intestine. The polypeptide is Probable 9-O-acetyl-N-acetylneuraminic acid deacetylase (nanS) (Escherichia coli (strain K12)).